The primary structure comprises 961 residues: Protein lin-2 (961 aa).

The region spanning 17 to 281 (LSIRDVIEQG…AKEALNHEWI (265 aa)) is the Protein kinase domain. Residues 310–320 (KSNVLSAVNSG) are calmodulin-binding. A disordered region spans residues 318 to 366 (NSGRFDETTPRQDTPQTAFVDGSSPGGDCCHRGESSSNDAAEPPADKDL). L27 domains follow at residues 365-422 (DLSG…CEPV) and 428-479 (TSTL…RDPK). The PDZ domain maps to 545–620 (RLVQFQKDTQ…MLRDARGQVT (76 aa)). Positions 633-717 (ACEIFVRAQF…PSPELQEWRT (85 aa)) constitute an SH3 domain. Residues 774–946 (RKTLVLLGAH…TIAQLERLVE (173 aa)) enclose the Guanylate kinase-like domain.

The protein belongs to the MAGUK family.

In terms of biological role, may play a structural role in the induction of the vulva. May be required for the localization of signal transduction molecules (such as let-23 receptor) to either the basal membrane domain or the cell junctions. This is Protein lin-2 (lin-2) from Caenorhabditis elegans.